The following is a 770-amino-acid chain: MFRYESLEDCPLDEDEDAFQGLGEEDEEIDQFNDDTFGSGAVDDDWQEAHERLAELEEKLPVAADEQTGNGERDEMDLLGDHEENLAERLSKMVIENELEDPAIMRAVQTRPVLQPQPGSLNSSIWDGSEVLRRIRGPLLAQEMPTVSVLEYALPQRPLQGPEDDRDLSERALPRRSTSPIIGSPPVRAVPIGTPPKQMAVPSFNQQILCPKPVHVRPPMPPRYPAPYGERISPNQLCSVPNSSLLGHPFPPNVPPVLSPLQRAQLLGGAQLQPGRMSPSQFARVPGFVGSPLAAMNPKLLQGRVGQMLPPAPSFRAFFSAPPPATPPPQQHPPGPGPHLQNLRPQAPMFRADTTHLHPQHRRLLHQRQLQSRNQHRNLNGTGDRGGHQSSHQDHLRKDPYANLMLQREKDWVSKIQMMQLQSTDPYLDDFYYQNYFEKLEKLSAAEEIQGDGPKKERTKLITPQVAKLEHAYQPVQFEGSLGKLTVSSVNNPRKMIDAVVTSRSEDDETKEKQVRDKRRKTLVIIEKTYSLLLDVEDYERRYLLSLEEERPALMDERKHKICSMYDNLRGKLPGQERPSDDHFVQIMCIRKGKRMVARILPFLSTEQAADILMATARNLPFLIKKDAQDEVLPCLLSPFSLLLYHLPSVTVTSLLQQLMNLPQSASAPAPSNSHLTAVLQNKFGLSLLLILLSRGEDLQSSDPAIESTQNNQWTEVMFMATRELLRIPQAALAKPISIPTNLVSLFSRYVDRQKLNLLETKLQLVQGIR.

A disordered region spans residues 1 to 42 (MFRYESLEDCPLDEDEDAFQGLGEEDEEIDQFNDDTFGSGAV). Residues 1–84 (MFRYESLEDC…EMDLLGDHEE (84 aa)) are region A; interaction with DDX6/RCK. An involved in nuclear foci localization region spans residues 1 to 397 (MFRYESLEDC…HQSSHQDHLR (397 aa)). Acidic residues predominate over residues 7–33 (LEDCPLDEDEDAFQGLGEEDEEIDQFN). The interval 85–388 (NLAERLSKMV…LNGTGDRGGH (304 aa)) is region N; interaction with decapping machinery. The short motif at 86–95 (LAERLSKMVI) is the Nuclear export signal element. The interval 155–195 (PQRPLQGPEDDRDLSERALPRRSTSPIIGSPPVRAVPIGTP) is disordered. The residue at position 177 (serine 177) is a Phosphoserine. Threonine 178 is modified (phosphothreonine). Serine 179 and serine 184 each carry phosphoserine. Residue threonine 194 is modified to Phosphothreonine. Arginine 217, arginine 223, and arginine 263 each carry asymmetric dimethylarginine. An involved in RNA-binding region spans residues 223–397 (RYPAPYGERI…HQSSHQDHLR (175 aa)). Serine 278 carries the post-translational modification Phosphoserine. Arginine 284 carries the asymmetric dimethylarginine modification. Disordered stretches follow at residues 319–340 (FSAP…GPHL) and 376–396 (HRNL…QDHL). The span at 321 to 337 (APPPATPPPQQHPPGPG) shows a compositional bias: pro residues. At arginine 385 the chain carries Omega-N-methylarginine. The segment covering 385–396 (RGGHQSSHQDHL) has biased composition (basic and acidic residues). Residues 389 to 448 (QSSHQDHLRKDPYANLMLQREKDWVSKIQMMQLQSTDPYLDDFYYQNYFEKLEKLSAAEE) are region H. Positions 398–770 (KDPYANLMLQ…TKLQLVQGIR (373 aa)) are involved in nuclear speckle localization. The interval 449 to 770 (IQGDGPKKER…TKLQLVQGIR (322 aa)) is region C.

This sequence belongs to the PAT1 family. In terms of assembly, interacts (via region A) with DDX6/RCK. Interacts (via region H and region C) with LSM1 and LSM4. Interacts (via region N) with DCP1A, DCP2, EDC3, EDC4 and XRN1. Interacts with the CCR4-NOT complex. Interacts with the Lsm-containing SMN-Sm protein complex. Interacts with EIF4ENIF1/4E-T.

It is found in the cytoplasm. The protein resides in the P-body. Its subcellular location is the nucleus. It localises to the PML body. The protein localises to the nucleus speckle. Functionally, RNA-binding protein involved in deadenylation-dependent decapping of mRNAs, leading to the degradation of mRNAs. Acts as a scaffold protein that connects deadenylation and decapping machinery. Required for cytoplasmic mRNA processing body (P-body) assembly. The protein is Protein PAT1 homolog 1 (Patl1) of Mus musculus (Mouse).